Consider the following 97-residue polypeptide: uncharacterized protein (97 aa).

This is an uncharacterized protein from Emericella nidulans (Aspergillus nidulans).